Consider the following 248-residue polypeptide: ATP synthase subunit a, chloroplastic (248 aa).

Helical transmembrane passes span 34–54 (LHGQVFIVSWLVMLALIIFAL), 95–115 (VPYISTVFLFIFGANWAGALI), 134–154 (INVTVALALLTSISYFYAGIS), and 203–223 (VFALLVPILIPLPVMTLGLFA).

The protein belongs to the ATPase A chain family. In terms of assembly, F-type ATPases have 2 components, CF(1) - the catalytic core - and CF(0) - the membrane proton channel. CF(1) has five subunits: alpha(3), beta(3), gamma(1), delta(1), epsilon(1). CF(0) has four main subunits: a, b, b' and c.

It localises to the plastid. The protein localises to the chloroplast thylakoid membrane. Functionally, key component of the proton channel; it plays a direct role in the translocation of protons across the membrane. The sequence is that of ATP synthase subunit a, chloroplastic from Guillardia theta (Cryptophyte).